The primary structure comprises 149 residues: Large ribosomal subunit protein eL24A (149 aa).

Composition is skewed to basic and acidic residues over residues 93–102 (KRNQRPEVRA) and 116–125 (KAASESEKKA). The interval 93-149 (KRNQRPEVRAAARAAALKQRKDKKAASESEKKAIKAKSAASSARGQAIKNAKAAARH) is disordered.

The protein belongs to the eukaryotic ribosomal protein eL24 family. As to quaternary structure, component of the large ribosomal subunit (LSU). Mature yeast ribosomes consist of a small (40S) and a large (60S) subunit. The 40S small subunit contains 1 molecule of ribosomal RNA (18S rRNA) and at least 33 different proteins. The large 60S subunit contains 3 rRNA molecules (25S, 5.8S and 5S rRNA) and at least 46 different proteins.

It is found in the cytoplasm. Component of the ribosome, a large ribonucleoprotein complex responsible for the synthesis of proteins in the cell. The small ribosomal subunit (SSU) binds messenger RNAs (mRNAs) and translates the encoded message by selecting cognate aminoacyl-transfer RNA (tRNA) molecules. The large subunit (LSU) contains the ribosomal catalytic site termed the peptidyl transferase center (PTC), which catalyzes the formation of peptide bonds, thereby polymerizing the amino acids delivered by tRNAs into a polypeptide chain. The nascent polypeptides leave the ribosome through a tunnel in the LSU and interact with protein factors that function in enzymatic processing, targeting, and the membrane insertion of nascent chains at the exit of the ribosomal tunnel. The protein is Large ribosomal subunit protein eL24A (rpl2401) of Schizosaccharomyces pombe (strain 972 / ATCC 24843) (Fission yeast).